A 59-amino-acid polypeptide reads, in one-letter code: UPF0434 protein lpg1920 (59 aa).

It belongs to the UPF0434 family.

The protein is UPF0434 protein lpg1920 of Legionella pneumophila subsp. pneumophila (strain Philadelphia 1 / ATCC 33152 / DSM 7513).